The following is a 291-amino-acid chain: Phytanoyl-CoA dioxygenase domain-containing protein 1 (291 aa).

Phosphothreonine is present on threonine 55. Residues lysine 102, methionine 141, histidine 156–aspartate 158, and tryptophan 174 each bind 2-oxoglutarate. The Fe cation site is built by histidine 156 and aspartate 158. Residue histidine 246 participates in Fe cation binding. 2-oxoglutarate-binding residues include serine 248 and arginine 257.

This sequence belongs to the PhyH family. PHYHD1 subfamily. Fe cation is required as a cofactor.

Activity is increased by ascorbate. Inhibited by myristoyl-CoA. Functionally, 2-oxoglutarate(2OG)-dependent dioxygenase that catalyzes the conversion of 2-oxoglutarate to succinate and CO(2) in an iron-dependent manner. However, does not couple 2OG turnover to the hydroxylation of acyl-coenzyme A derivatives, implying that it is not directly involved in phytanoyl coenzyme-A metabolism. Does not show detectable activity towards fatty acid CoA thioesters. Isoform 2 probably lacks enzyme activity. In terms of biological role, isoform 3 probably lacks enzyme activity. The chain is Phytanoyl-CoA dioxygenase domain-containing protein 1 from Homo sapiens (Human).